The following is a 251-amino-acid chain: Imidazole glycerol phosphate synthase subunit HisF (251 aa).

Active-site residues include D13 and D132.

This sequence belongs to the HisA/HisF family. Heterodimer of HisH and HisF.

It localises to the cytoplasm. The enzyme catalyses 5-[(5-phospho-1-deoxy-D-ribulos-1-ylimino)methylamino]-1-(5-phospho-beta-D-ribosyl)imidazole-4-carboxamide + L-glutamine = D-erythro-1-(imidazol-4-yl)glycerol 3-phosphate + 5-amino-1-(5-phospho-beta-D-ribosyl)imidazole-4-carboxamide + L-glutamate + H(+). It participates in amino-acid biosynthesis; L-histidine biosynthesis; L-histidine from 5-phospho-alpha-D-ribose 1-diphosphate: step 5/9. IGPS catalyzes the conversion of PRFAR and glutamine to IGP, AICAR and glutamate. The HisF subunit catalyzes the cyclization activity that produces IGP and AICAR from PRFAR using the ammonia provided by the HisH subunit. This is Imidazole glycerol phosphate synthase subunit HisF from Campylobacter concisus (strain 13826).